The chain runs to 321 residues: Malate dehydrogenase (321 aa).

NAD(+) is bound by residues glycine 10–glycine 15 and aspartate 34. Residues arginine 83 and arginine 89 each contribute to the substrate site. NAD(+) contacts are provided by residues asparagine 96 and isoleucine 119–asparagine 121. Substrate-binding residues include asparagine 121 and arginine 152. Catalysis depends on histidine 176, which acts as the Proton acceptor.

Belongs to the LDH/MDH superfamily. MDH type 3 family.

The catalysed reaction is (S)-malate + NAD(+) = oxaloacetate + NADH + H(+). Its function is as follows. Catalyzes the reversible oxidation of malate to oxaloacetate. In Sinorhizobium fredii (strain NBRC 101917 / NGR234), this protein is Malate dehydrogenase.